Reading from the N-terminus, the 425-residue chain is Serine--tRNA ligase (425 aa).

L-serine is bound at residue 231–233 (TAE). Residue 262–264 (RSE) participates in ATP binding. Residue E285 coordinates L-serine. An ATP-binding site is contributed by 349–352 (EISS). S385 contacts L-serine.

The protein belongs to the class-II aminoacyl-tRNA synthetase family. Type-1 seryl-tRNA synthetase subfamily. In terms of assembly, homodimer. The tRNA molecule binds across the dimer.

Its subcellular location is the cytoplasm. It carries out the reaction tRNA(Ser) + L-serine + ATP = L-seryl-tRNA(Ser) + AMP + diphosphate + H(+). It catalyses the reaction tRNA(Sec) + L-serine + ATP = L-seryl-tRNA(Sec) + AMP + diphosphate + H(+). Its pathway is aminoacyl-tRNA biosynthesis; selenocysteinyl-tRNA(Sec) biosynthesis; L-seryl-tRNA(Sec) from L-serine and tRNA(Sec): step 1/1. In terms of biological role, catalyzes the attachment of serine to tRNA(Ser). Is also able to aminoacylate tRNA(Sec) with serine, to form the misacylated tRNA L-seryl-tRNA(Sec), which will be further converted into selenocysteinyl-tRNA(Sec). The protein is Serine--tRNA ligase of Bartonella henselae (strain ATCC 49882 / DSM 28221 / CCUG 30454 / Houston 1) (Rochalimaea henselae).